The sequence spans 439 residues: Probable RNA-binding protein 23 (439 aa).

Residues 13 to 159 (MLEAPYKKEE…PVREPVDNLS (147 aa)) are disordered. Residues 17–34 (PYKKEEDEQQRKEVKKDY) show a composition bias toward basic and acidic residues. Residues 36–57 (SNTTSSTSNSGNETSGSSTIGE) show a composition bias toward low complexity. The span at 60-90 (KKKRSRSHNKSRDRKRSRSRDRDRYRRRNSR) shows a compositional bias: basic residues. The span at 103-125 (RSWDRRHGSESRSRDHRREDRVH) shows a compositional bias: basic and acidic residues. Phosphoserine is present on residues serine 128 and serine 149. Basic and acidic residues predominate over residues 144–159 (HFREKSPVREPVDNLS). RRM domains are found at residues 166-243 (RTVF…ASQA) and 263-341 (MRLY…HVTE).

This sequence belongs to the splicing factor SR family. In terms of processing, aryl sulfonamide anticancer drugs, such as indisulam (E7070) or E7820, promote ubiquitination and subsequent degradation by the DCX(DCAF15) complex. Aryl sulfonamide anticancer drugs change the substrate specificity of DCAF15 by acting as a molecular glue that promotes binding between DCAF15 and weak affinity interactor RBM23. Highly expressed in placenta, liver, skeletal muscle, heart and kidney. Expressed at lower levels in the colon, thymus, spleen, small intestine and lung.

Its subcellular location is the nucleus. In terms of biological role, RNA-binding protein that acts both as a transcription coactivator and pre-mRNA splicing factor. Regulates steroid hormone receptor-mediated transcription, independently of the pre-mRNA splicing factor activity. The sequence is that of Probable RNA-binding protein 23 from Homo sapiens (Human).